The sequence spans 166 residues: Small ribosomal subunit protein uS5 (166 aa).

An S5 DRBM domain is found at 12 to 75 (YIEKLVQVNR…EAARRNMIQV (64 aa)).

It belongs to the universal ribosomal protein uS5 family. Part of the 30S ribosomal subunit. Contacts proteins S4 and S8.

Its function is as follows. With S4 and S12 plays an important role in translational accuracy. In terms of biological role, located at the back of the 30S subunit body where it stabilizes the conformation of the head with respect to the body. This chain is Small ribosomal subunit protein uS5, found in Ectopseudomonas mendocina (strain ymp) (Pseudomonas mendocina).